The sequence spans 498 residues: Tyrosine 3-monooxygenase (498 aa).

Positions 1–10 are enriched in pro residues; it reads MPTPSAPSPQ. Positions 1-31 are disordered; it reads MPTPSAPSPQPKGFRRAVSEQDAKQAEAVTS. Phosphoserine; by CaMK2 is present on Ser19. Ser31 carries the post-translational modification Phosphoserine. Ser40 bears the Phosphoserine; by CaMK2 and PKA mark. Fe cation is bound by residues His331, His336, and Glu376. Ser472 bears the Phosphoserine mark.

This sequence belongs to the biopterin-dependent aromatic amino acid hydroxylase family. In terms of assembly, homotetramer. Interacts (when phosphorylated at Ser-19) with YWHAG; one YWHAG dimer binds to one TH tetramer and this interaction may influence the phosphorylation and dephosphorylation of other sites. Interacts with NT5DC2; the interaction results in reduced phosphorylation and decreased catalytic activity of TH. Fe(2+) is required as a cofactor. Post-translationally, phosphorylated on Ser-19, Ser-31 and Ser-40 by several protein kinases with different site specificities. Phosphorylation at Ser-31 and Ser-40 leads to an increase of TH activity. Phosphorylation at Ser-40 activates the enzyme and also counteracts the feedback inhibition of TH by catecholamines. Phosphorylation of Ser-19 and Ser-31 triggers the proteasomal degradation of TH through the ubiquitin-proteasome pathway. Phosphorylation at Ser-31 facilitates transport of TH from the soma to the nerve terminals via the microtubule network. Phosphorylation at Ser-19 induces the high-affinity binding to the 14-3-3 protein YWHAG; this interaction may influence the phosphorylation and dephosphorylation of other sites. Ser-19 increases the phosphorylation at Ser-40 in a hierarchical manner, leading to increased activity.

The protein localises to the cytoplasm. It localises to the perinuclear region. Its subcellular location is the nucleus. It is found in the cell projection. The protein resides in the axon. The protein localises to the cytoplasmic vesicle. It localises to the secretory vesicle. Its subcellular location is the synaptic vesicle. It catalyses the reaction (6R)-L-erythro-5,6,7,8-tetrahydrobiopterin + L-tyrosine + O2 = (4aS,6R)-4a-hydroxy-L-erythro-5,6,7,8-tetrahydrobiopterin + L-dopa. The protein operates within catecholamine biosynthesis; dopamine biosynthesis; dopamine from L-tyrosine: step 1/2. Its activity is regulated as follows. Inhibited in feedback fashion by the catecholamine neurotransmitters, especially by dopamine in competition with tetrahydrobiopterin. Phosphorylation of several Ser/Thr residues in the N-terminus regulates the catalytic activity. Ser-31 and Ser-40 are readily phosphorylated to activate the catalytic activity. A cysteine modification induced by N-ethylmaleimide (NEM), inhibits tyrosine 3-monooxygenase activity through the modification of the Cys-177. Catalyzes the conversion of L-tyrosine to L-dihydroxyphenylalanine (L-Dopa), the rate-limiting step in the biosynthesis of catecholamines, dopamine, noradrenaline, and adrenaline. Uses tetrahydrobiopterin and molecular oxygen to convert tyrosine to L-Dopa. In addition to tyrosine, is able to catalyze the hydroxylation of phenylalanine and tryptophan but with lower specificity. Positively regulates the regression of retinal hyaloid vessels during postnatal development. The sequence is that of Tyrosine 3-monooxygenase (Th) from Rattus norvegicus (Rat).